A 338-amino-acid chain; its full sequence is MTLSNCDSLDNLFQDPPEEEESSKFVEAVRTLMNRNDMGYPPAAANGTYCLKKIKSLNAKQWKINKKRMCMLPAVKKKNFDFHEQRSLILNLNLWKFIKFINCSSKNNYNKNNKHVRSSNNTVKNENVLPLQKHKKVDNDQRLENLFWRSWFKARKRRDIMGKPRERHIKFNDNVEQCIITDEHFIQRLPSTRLNSTDEQRPCSKSELDPCIGNAASKRSFYDYNSVYVASDAIITTAAATAIISSNSGDYQRGHDVRDVPRNVLLQAGETDFSSVLRVDSDLKLSNISHHSPVKPSSTSSHSTFIFESETDTDTDTDAETENDIDAYIDTSIPNLLL.

Residues methionine 1 to glutamate 21 form a disordered region.

Functionally, regulatory subunit, binds to type-1 protein phosphatase. Functions with HEX2/REG1 and SNF1 protein kinase to regulate growth. Might regulate SNF1 directly or indirectly. The polypeptide is Protein REG2 (REG2) (Saccharomyces cerevisiae (strain ATCC 204508 / S288c) (Baker's yeast)).